The primary structure comprises 366 residues: tRNA(Met) cytidine acetate ligase (366 aa).

Residues Ile7 to Leu20, Gly96, Asn152, and Arg175 each bind ATP.

This sequence belongs to the TmcAL family.

It localises to the cytoplasm. It catalyses the reaction cytidine(34) in elongator tRNA(Met) + acetate + ATP = N(4)-acetylcytidine(34) in elongator tRNA(Met) + AMP + diphosphate. Its function is as follows. Catalyzes the formation of N(4)-acetylcytidine (ac(4)C) at the wobble position of elongator tRNA(Met), using acetate and ATP as substrates. First activates an acetate ion to form acetyladenylate (Ac-AMP) and then transfers the acetyl group to tRNA to form ac(4)C34. The polypeptide is tRNA(Met) cytidine acetate ligase (Streptococcus mutans serotype c (strain ATCC 700610 / UA159)).